The primary structure comprises 148 residues: UPF0260 protein YPK_2117 (148 aa).

This sequence belongs to the UPF0260 family.

In Yersinia pseudotuberculosis serotype O:3 (strain YPIII), this protein is UPF0260 protein YPK_2117.